The following is a 206-amino-acid chain: uncharacterized protein (206 aa).

This is an uncharacterized protein from Aquifex aeolicus (strain VF5).